Here is a 569-residue protein sequence, read N- to C-terminus: Matrix metalloproteinase-21 (569 aa).

The first 24 residues, 1 to 24, serve as a signal peptide directing secretion; that stretch reads MLAASIFRPTLLLCWLAAPWPTQP. Positions 25–144 are excised as a propeptide; that stretch reads ESLFHSRDRS…GPPPRARSRR (120 aa). Positions 115–122 match the Cysteine switch motif; sequence PRCGVPDM. The segment at 115–166 is disordered; it reads PRCGVPDMRPPPPSAPPSPPGPPPRARSRRSPRAPLSLSRRGWQPRGYPDGG. Position 117 (Cys-117) interacts with Zn(2+). Residues 122–139 are compositionally biased toward pro residues; the sequence is MRPPPPSAPPSPPGPPPR. Low complexity predominate over residues 147–156; sequence RAPLSLSRRG. Position 283 (His-283) interacts with Zn(2+). Glu-284 is an active-site residue. Residues His-287 and His-293 each coordinate Zn(2+). An intrachain disulfide couples Cys-329 to Cys-560. 4 Hemopexin repeats span residues 330 to 389, 391 to 447, 448 to 496, and 503 to 559; these read EGSF…WPGI, THNI…FPGI, PSPL…FPAV, and FRNI…WFDV. N-linked (GlcNAc...) asparagine glycosylation is present at Asn-372.

Belongs to the peptidase M10A family. Zn(2+) serves as cofactor. It depends on Ca(2+) as a cofactor. In terms of processing, the precursor is cleaved by a furin endopeptidase. As to expression, identified in fetal brain, kidney and liver. In adult tissues found primarily in ovary, kidney, liver, lung, placenta, brain and peripheral blood leukocytes. Expressed as well in various cancer cell lines.

It localises to the secreted. Plays a specialized role in the generation of left-right asymmetry during embryogenesis. May act as a negative regulator of the NOTCH-signaling pathway. Cleaves alpha-1-antitrypsin. This is Matrix metalloproteinase-21 (MMP21) from Homo sapiens (Human).